The following is a 160-amino-acid chain: Large ribosomal subunit protein uL16 (160 aa).

Residues 138–148 (KNLEVSSQENT) show a composition bias toward polar residues. The interval 138–160 (KNLEVSSQENTKNNKESQEEVKQ) is disordered. The span at 149-160 (KNNKESQEEVKQ) shows a compositional bias: basic and acidic residues.

The protein belongs to the universal ribosomal protein uL16 family. Part of the 50S ribosomal subunit.

In terms of biological role, binds 23S rRNA and is also seen to make contacts with the A and possibly P site tRNAs. The polypeptide is Large ribosomal subunit protein uL16 (Prochlorococcus marinus (strain MIT 9312)).